A 748-amino-acid chain; its full sequence is Histone-lysine N-methyltransferase EZH2 (748 aa).

A compositionally biased stretch (acidic residues) spans Tyr184–Asp199. Disordered stretches follow at residues Tyr184 to Phe220 and Ala342 to Pro428. Basic and acidic residues predominate over residues Asp200 to Phe220. Positions Thr347–Arg359 are enriched in basic residues. A compositionally biased stretch (polar residues) spans Asn362 to Val374. Basic and acidic residues predominate over residues Glu376–Gly387. Residues Cys505 to Ser607 enclose the CXC domain. Residues Lys614–Arg729 form the SET domain.

It belongs to the class V-like SAM-binding methyltransferase superfamily. Histone-lysine methyltransferase family. EZ subfamily. As to quaternary structure, component of the prc2/eed-ezh2 complex.

The protein resides in the nucleus. It catalyses the reaction L-lysyl(27)-[histone H3] + 3 S-adenosyl-L-methionine = N(6),N(6),N(6)-trimethyl-L-lysyl(27)-[histone H3] + 3 S-adenosyl-L-homocysteine + 3 H(+). Functionally, polycomb group (PcG) protein. Catalytic subunit of the prc2/eed-ezh2 complex, which methylates 'Lys-9' and 'Lys-27' of histone H3, leading to transcriptional repression of the affected target gene. May repress transcription of the egr2 and en2 genes. May regulate the circadian clock via histone methylation at the promoter of the circadian genes. This chain is Histone-lysine N-methyltransferase EZH2 (ezh2-a), found in Xenopus laevis (African clawed frog).